The chain runs to 473 residues: 3-oxoacyl-[acyl-carrier-protein] synthase I, chloroplastic (473 aa).

Residues 1 to 10 (MQALQSSSLR) show a composition bias toward polar residues. The segment at 1–26 (MQALQSSSLRASPPNPLRLPSNRQSH) is disordered. Residues 1 to 46 (MQALQSSSLRASPPNPLRLPSNRQSHQLITNARPLRRQQRSFISAS) constitute a chloroplast transit peptide. In terms of domain architecture, Ketosynthase family 3 (KS3) spans 60–470 (KKRVVITGMG…GHNSVVAFSA (411 aa)). Catalysis depends on for beta-ketoacyl synthase activity residues cysteine 224, histidine 364, and histidine 400.

Belongs to the thiolase-like superfamily. Beta-ketoacyl-ACP synthases family. As to quaternary structure, homodimer.

It localises to the plastid. Its subcellular location is the chloroplast stroma. The catalysed reaction is a fatty acyl-[ACP] + malonyl-[ACP] + H(+) = a 3-oxoacyl-[ACP] + holo-[ACP] + CO2. Its function is as follows. Catalyzes the condensation reaction of fatty acid synthesis by the addition to an acyl acceptor of two carbons from malonyl-ACP. Specific for elongation from C-10 to unsaturated C-16 and C-18 fatty acids. This is 3-oxoacyl-[acyl-carrier-protein] synthase I, chloroplastic (KAS1) from Arabidopsis thaliana (Mouse-ear cress).